We begin with the raw amino-acid sequence, 254 residues long: Alcohol dehydrogenase (254 aa).

10-33 (FVAGLGGIGLDTSRELVKRNLKNL) contacts NAD(+). Ser138 serves as a coordination point for substrate. The Proton acceptor role is filled by Tyr151.

It belongs to the short-chain dehydrogenases/reductases (SDR) family. As to quaternary structure, homodimer.

It carries out the reaction a primary alcohol + NAD(+) = an aldehyde + NADH + H(+). The enzyme catalyses a secondary alcohol + NAD(+) = a ketone + NADH + H(+). This is Alcohol dehydrogenase (Adh) from Drosophila pseudoobscura pseudoobscura (Fruit fly).